Consider the following 74-residue polypeptide: Omega-conotoxin-like protein 1 (74 aa).

Residues 1 to 20 (MSKFILLVCILLLTTNIVSA) form the signal peptide. 3 disulfides stabilise this stretch: C24–C38, C31–C43, and C37–C50.

As to expression, highly expressed in brain. Is also found in hemolymph.

The impact of this protein on the neuronal activity of the honeybee brain is not known. It does not affect apparent movement or hatching of blowfly larvae. However, when injected into fish, it induces a strong reversible paralytic effect. In addition, the presence of this small peptide in the hemolymph of adult drones together with its induction after bacterial infection suggests that this peptide exhibits antibacterial activity. This peptide may act by inhibiting ion channels. This chain is Omega-conotoxin-like protein 1, found in Apis mellifera (Honeybee).